We begin with the raw amino-acid sequence, 141 residues long: Large ribosomal subunit protein uL22 (141 aa).

This sequence belongs to the universal ribosomal protein uL22 family. In terms of assembly, part of the 50S ribosomal subunit.

In terms of biological role, this protein binds specifically to 23S rRNA; its binding is stimulated by other ribosomal proteins, e.g. L4, L17, and L20. It is important during the early stages of 50S assembly. It makes multiple contacts with different domains of the 23S rRNA in the assembled 50S subunit and ribosome. Its function is as follows. The globular domain of the protein is located near the polypeptide exit tunnel on the outside of the subunit, while an extended beta-hairpin is found that lines the wall of the exit tunnel in the center of the 70S ribosome. This chain is Large ribosomal subunit protein uL22, found in Frankia casuarinae (strain DSM 45818 / CECT 9043 / HFP020203 / CcI3).